The primary structure comprises 248 residues: Clathrin light chain A (248 aa).

Positions 1-93 (MAELDPFGAP…YQESNGPTDS (93 aa)) are disordered. Gly residues predominate over residues 13–25 (APGGPALGNGVAG). Residues 100–162 (VDRLQSEPES…QLQKTKASNR (63 aa)) are involved in binding clathrin heavy chain. Residues S105 and S206 each carry the phosphoserine modification. K223 carries the post-translational modification N6-acetyllysine. S236 is subject to Phosphoserine. Residue K242 is modified to N6-acetyllysine.

The protein belongs to the clathrin light chain family. In terms of assembly, clathrin coats are formed from molecules containing 3 heavy chains and 3 light chains. Interacts with CALY; the interaction stimulates clathrin self-assembly and clathrin-mediated endocytosis. Interacts with CKAP5 and TACC3 forming the TACC3/ch-TOG/clathrin complex located at spindle inter-microtubules bridges; the complex implicates clathrin triskelions.

The protein localises to the cytoplasmic vesicle membrane. Its subcellular location is the membrane. It localises to the coated pit. The protein resides in the cytoplasm. It is found in the cytoskeleton. The protein localises to the spindle. Functionally, clathrin is the major protein of the polyhedral coat of coated pits and vesicles. Acts as a component of the TACC3/ch-TOG/clathrin complex proposed to contribute to stabilization of kinetochore fibers of the mitotic spindle by acting as inter-microtubule bridge. In Rattus norvegicus (Rat), this protein is Clathrin light chain A (Clta).